The primary structure comprises 186 residues: Shikimate kinase (186 aa).

21–26 (GVGKTT) contributes to the ATP binding site. Threonine 25 contacts Mg(2+). Residues aspartate 43, arginine 67, and glycine 90 each coordinate substrate. Arginine 129 contributes to the ATP binding site. A substrate-binding site is contributed by arginine 147.

The protein belongs to the shikimate kinase family. In terms of assembly, monomer. Mg(2+) is required as a cofactor.

The protein resides in the cytoplasm. The catalysed reaction is shikimate + ATP = 3-phosphoshikimate + ADP + H(+). Its pathway is metabolic intermediate biosynthesis; chorismate biosynthesis; chorismate from D-erythrose 4-phosphate and phosphoenolpyruvate: step 5/7. Functionally, catalyzes the specific phosphorylation of the 3-hydroxyl group of shikimic acid using ATP as a cosubstrate. The sequence is that of Shikimate kinase from Bacillus subtilis (strain 168).